Here is a 130-residue protein sequence, read N- to C-terminus: UPF0102 protein BT_1882 (130 aa).

This sequence belongs to the UPF0102 family.

The protein is UPF0102 protein BT_1882 of Bartonella tribocorum (strain CIP 105476 / IBS 506).